The following is a 580-amino-acid chain: Mucin-1 (580 aa).

The N-terminal stretch at Met-1–Ala-22 is a signal peptide. The Extracellular portion of the chain corresponds to Asn-23–Ala-489. A compositionally biased stretch (polar residues) spans Thr-28 to Arg-37. The interval Thr-28–Pro-359 is disordered. Positions Thr-38–Ser-88 are enriched in low complexity. 11 repeat units span residues Pro-70–Ser-89, Pro-90–Ser-109, Pro-110–Ser-129, Pro-130–Ser-149, Pro-150–Ser-169, Pro-170–Ser-189, Pro-190–Ser-209, Pro-210–Ser-229, Pro-230–Ser-249, Pro-250–Ser-269, and Pro-270–Ser-289. Residues Pro-70–Ser-289 form an 11 X 20 AA approximate tandem repeats of P-A-P-S-P-A-A-S-P-G-H-D-G-A-S-T-P-T-S-S region. Ser-73, Ser-77, and Ser-84 each carry an O-linked (GalNAc...) serine glycan. Thr-85 and Thr-87 each carry an O-linked (GalNAc...) threonine glycan. O-linked (GalNAc...) serine glycosylation is found at Ser-88 and Ser-89. 9 stretches are compositionally biased toward low complexity: residues Ala-96–Ser-108, Ala-116–Ser-128, Ala-136–Ser-148, Ala-156–Gly-168, Ala-176–Ser-188, Ala-196–Gly-208, Ala-216–Ser-228, Ala-236–Gly-248, and Ala-256–Ser-306. N-linked (GlcNAc...) asparagine glycosylation is present at Asn-161. N-linked (GlcNAc...) asparagine glycosylation is present at Asn-201. Asn-241 carries an N-linked (GlcNAc...) asparagine glycan. Over residues His-308 to Thr-344 the composition is skewed to polar residues. The segment covering Ala-345–Ser-357 has biased composition (low complexity). An SEA domain is found at Arg-368 to Ser-475. N-linked (GlcNAc...) asparagine glycosylation is found at Asn-384 and Asn-460. A helical membrane pass occupies residues Leu-490–Val-510. 2 S-palmitoyl cysteine lipidation sites follow: Cys-511 and Cys-513. At Cys-511–Leu-580 the chain is on the cytoplasmic side. The interval Glu-519 to Pro-555 is interaction with P53. Tyr-530 bears the Phosphotyrosine; by PDGFR mark. Positions Tyr-530–Met-533 match the Interaction with GRB2 motif. A Phosphotyrosine modification is found at Tyr-539. Positions Arg-544–Asn-563 are disordered. Tyr-545 carries the phosphotyrosine; by PDGFR modification. Residues Ser-550 to Glu-557 are required for interaction with GSK3B. Residue Thr-551 is modified to Phosphothreonine; by PKC/PRKCD. The residue at position 554 (Ser-554) is a Phosphoserine; by GSK3-beta. Tyr-556 is modified (phosphotyrosine; by CSK, EGFR and SRC). An Interaction with SRC and ESR1 motif is present at residues Tyr-556–Val-559. The required for interaction with beta- and gamma-catenins stretch occupies residues Ser-560–Leu-568. Tyr-570 carries the phosphotyrosine modification. The Required for interaction with AP1S2 signature appears at Tyr-570 to Asn-572.

The alpha subunit forms a tight, non-covalent heterodimeric complex with the proteolytically-released beta subunit. Binds directly the SH2 domain of GRB2, and forms a MUC1/GRB2/SOS1 complex involved in RAS signaling. The cytoplasmic tail (MUC1CT) interacts with several proteins such as, SRC, CTNNB1 and ERBs. Interaction with the SH2 domain of CSK decreases interaction with GSK3B. Interacts with CTNNB1/beta-catenin and JUP/gamma-catenin and promotes cell adhesion. Interaction with JUP/gamma-catenin is induced by heregulin. Binds PRKCD, ERBB2, ERBB3 and ERBB4. Heregulin (HRG) stimulates the interaction with ERBB2 and, to a much lesser extent, the interaction with ERBB3 and ERBB4. Interacts with P53 in response to DNA damage. Interacts with KLF4. Interacts with estrogen receptor alpha/ESR1, through its DNA-binding domain, and stimulates its transcription activity. Binds ADAM17. Highly glycosylated (N- and O-linked carbohydrates and sialic acid). O-linked glycosylation consists mainly of GalNAc, galactose, and sialic acid. The ratio from pools of milk from different dairy breeds is GalNAc: GlcNAc:galactose:mannose:sialic acid is 14:1:10:1:15. Post-translationally, proteolytic cleavage in the SEA domain occurs in the endoplasmic reticulum by an autoproteolytic mechanism and requires the full-length SEA domain as well as requiring a Ser, Thr or Cys residue at the P + 1 site. Ectodomain shedding is mediated by ADAM17 in uterine epithelial cells. In terms of processing, dual palmitoylation on cysteine residues in the CQC motif is required for recycling from endosomes back to the plasma membrane. Phosphorylated on tyrosines and serine residues in the C-terminal. Phosphorylation on tyrosines in the C-terminal increases the nuclear location of MUC1 and beta-catenin. Phosphorylation by PKC delta induces binding of MUC1 to beta-catenin/CTNNB1 and thus decreases the formation of the beta-catenin/E-cadherin complex. Src-mediated phosphorylation inhibits interaction with GSK3B. Csk- or Src- or EGFR-mediated phosphorylation on Tyr-556 increases binding to beta-catenin/CTNNB1. GSK3B-mediated phosphorylation on Ser-554 decreases this interaction but restores the formation of the beta-cadherin/E-cadherin complex. On T-cell receptor activation, phosphorylated by LCK. PDGFR-mediated phosphorylation increases nuclear colocalization of MUC1CT and CTNNB1. Expressed on the apical surface of epithelia cells, and on the milk fat globule membrane (MGGM).

Its subcellular location is the apical cell membrane. The protein localises to the cell membrane. The protein resides in the cytoplasm. It is found in the nucleus. In terms of biological role, the alpha subunit has cell adhesive properties. May provide a protective layer on epithelial cells against bacterial and enzyme attack. Functionally, the beta subunit contains a C-terminal domain which is involved in cell signaling, through phosphorylations and protein-protein interactions. Modulates signaling in ERK, Src and NF-kappa-B pathways. In activated T-cells, influences directly or indirectly the Ras/MAPK pathway. Promotes tumor progression. Regulates P53-mediated transcription and determines cell fate in the genotoxic stress response. Binds, together with KLF4, the PE21 promoter element of P53 and represses P53 activity. In Bos taurus (Bovine), this protein is Mucin-1 (MUC1).